A 1213-amino-acid chain; its full sequence is Probable ATP-binding protein BrxC (1213 aa).

Belongs to the BrxC family.

In terms of biological role, BREX systems (bacteriophage exclusion) provide immunity against bacteriophage. Part of a type 1 BREX system which protects against dsDNA phage. This system allows phage adsorption but prevents phage DNA replication, without degradation of the phage DNA. Methylation of bacterial DNA by PglX guides self/non-self discrimination. When the brxA-brxB-brxC-pglX-pglZ-brxL genes are transformed into a susceptible E.coli strain (BW25113) they confer very high resistance to infection by bacteriophage VR7 and VpaE1, about 100-fold protection against lambda, T5 and T7 and no protection against RNA phage Qbeta, ssDNA phage M13 or dSDNA phage T4 and VR5. Glycosylated phage DNA is not susceptible to BREX. The BREX system does not confer resistance to lysogenic lambda phage, i.e. prophage that are integrated into the chromosomal DNA and then induced to form phage. This chain is Probable ATP-binding protein BrxC, found in Escherichia coli O9:H4 (strain HS).